Reading from the N-terminus, the 443-residue chain is Phosphoglucosamine mutase (443 aa).

The active-site Phosphoserine intermediate is the serine 101. Mg(2+) contacts are provided by serine 101, aspartate 239, aspartate 241, and aspartate 243. Serine 101 carries the phosphoserine modification.

Belongs to the phosphohexose mutase family. Requires Mg(2+) as cofactor. Activated by phosphorylation.

It carries out the reaction alpha-D-glucosamine 1-phosphate = D-glucosamine 6-phosphate. Catalyzes the conversion of glucosamine-6-phosphate to glucosamine-1-phosphate. This Francisella tularensis subsp. holarctica (strain FTNF002-00 / FTA) protein is Phosphoglucosamine mutase.